A 456-amino-acid polypeptide reads, in one-letter code: Chaperone protein dnaJ GFA2, mitochondrial (456 aa).

A mitochondrion-targeting transit peptide spans 1–89 (MVPSNGAKVL…RSFHGTGSSF (89 aa)). Residues 94–159 (DYYSVLGVSK…EKRDLYDQVG (66 aa)) form the J domain. A CR-type zinc finger spans residues 225-303 (GCSKTVTFQT…CRGARVVRGQ (79 aa)). Residues Cys238, Cys241, Cys255, Cys258, Cys277, Cys280, Cys291, and Cys294 each contribute to the Zn(2+) site. 4 CXXCXGXG motif repeats span residues 238–245 (CNTCGGQG), 255–262 (CKACNGSG), 277–284 (CQKCGGAG), and 291–298 (CKSCRGAR).

The protein belongs to the DnaJ family. As to expression, widely expressed.

It localises to the mitochondrion. In terms of biological role, chaperone that may play a role in mitochondrial protein folding. Involved in female gametophyte development. Required for cell death of the synergid cells during fertilization process, and fusion of the polar nuclei during megagametogenesis. This is Chaperone protein dnaJ GFA2, mitochondrial from Arabidopsis thaliana (Mouse-ear cress).